A 151-amino-acid polypeptide reads, in one-letter code: Large-conductance mechanosensitive channel (151 aa).

A run of 2 helical transmembrane segments spans residues 14-34 (VVDMAVGIIIGGAFGALVNSL) and 85-105 (GLFVNALIGFLIMAFAVFLLV).

It belongs to the MscL family. As to quaternary structure, homopentamer.

It is found in the cell inner membrane. Its function is as follows. Channel that opens in response to stretch forces in the membrane lipid bilayer. May participate in the regulation of osmotic pressure changes within the cell. The sequence is that of Large-conductance mechanosensitive channel from Chlorobaculum tepidum (strain ATCC 49652 / DSM 12025 / NBRC 103806 / TLS) (Chlorobium tepidum).